We begin with the raw amino-acid sequence, 396 residues long: 8-amino-7-oxononanoate synthase (396 aa).

Arg-19 is a substrate binding site. A pyridoxal 5'-phosphate-binding site is contributed by 106–107 (GY). His-131 lines the substrate pocket. Pyridoxal 5'-phosphate is bound by residues Ser-176, His-204, and Thr-233. Lys-236 bears the N6-(pyridoxal phosphate)lysine mark. Thr-350 contributes to the substrate binding site.

The protein belongs to the class-II pyridoxal-phosphate-dependent aminotransferase family. BioF subfamily. Homodimer. The cofactor is pyridoxal 5'-phosphate.

The catalysed reaction is 6-carboxyhexanoyl-[ACP] + L-alanine + H(+) = (8S)-8-amino-7-oxononanoate + holo-[ACP] + CO2. It functions in the pathway cofactor biosynthesis; biotin biosynthesis. Its function is as follows. Catalyzes the decarboxylative condensation of pimeloyl-[acyl-carrier protein] and L-alanine to produce 8-amino-7-oxononanoate (AON), [acyl-carrier protein], and carbon dioxide. The sequence is that of 8-amino-7-oxononanoate synthase from Pseudomonas savastanoi pv. phaseolicola (strain 1448A / Race 6) (Pseudomonas syringae pv. phaseolicola (strain 1448A / Race 6)).